Reading from the N-terminus, the 270-residue chain is Glutamate racemase (270 aa).

Substrate contacts are provided by residues 10–11 (DS) and 42–43 (YG). Cysteine 74 (proton donor/acceptor) is an active-site residue. Residue 75-76 (NT) participates in substrate binding. Cysteine 189 serves as the catalytic Proton donor/acceptor. A substrate-binding site is contributed by 190-191 (TH).

This sequence belongs to the aspartate/glutamate racemases family.

The enzyme catalyses L-glutamate = D-glutamate. It participates in cell wall biogenesis; peptidoglycan biosynthesis. Provides the (R)-glutamate required for cell wall biosynthesis. The polypeptide is Glutamate racemase (Bartonella quintana (strain Toulouse) (Rochalimaea quintana)).